The following is a 462-amino-acid chain: Ubiquitin carboxyl-terminal hydrolase calypso (462 aa).

The 232-residue stretch at 29–260 folds into the UCH catalytic domain; it reads GWLELESDPG…IRFNLMAVVP (232 aa). Catalysis depends on Cys-115, which acts as the Nucleophile. Residue His-197 is the Proton donor of the active site. The ULD domain maps to 357-385; that stretch reads NYDKFICTFLTMLAHQGVLGELVSQHLLP. Residues 387–462 form a positively charged C-terminal tail required for binding nucleosomes region; sequence KKISGQSAAN…KGRNKCRKRK (76 aa). The tract at residues 394 to 462 is disordered; the sequence is AANRLNKQNS…KGRNKCRKRK (69 aa). A compositionally biased stretch (low complexity) spans 399-447; the sequence is NKQNSAAASTANSSAGATAGGAKSQQQQQQQQQPQQPQTPKNGKSPGKT. The span at 448-462 shows a compositional bias: basic residues; that stretch reads PGRRRKGRNKCRKRK.

This sequence belongs to the peptidase C12 family. BAP1 subfamily. As to quaternary structure, catalytic component of the polycomb repressive deubiquitinase (PR-DUB) complex, at least composed of caly/calypso, Asx and sba (MBD5/6 homolog). The PR-DUB complex associates with nucleosomes to mediate deubiquitination of histone H2AK118ub1 substrates; the association requires the positively charged C-terminal tail of caly, probably due to direct binding of DNA. Interacts (via ULD domain) with Asx (via DEUBAD domain); the interaction produces a stable heterodimer with a composite binding site for ubiquitin. Homodimerizes (via coiled-coil hinge-region between the UCH and ULD domains) to mediate assembly of 2 copies of the caly-Asx heterodimer into a bisymmetric tetramer; dimerization enhances PR-DUB association with nucleosomes.

The protein resides in the nucleus. It carries out the reaction Thiol-dependent hydrolysis of ester, thioester, amide, peptide and isopeptide bonds formed by the C-terminal Gly of ubiquitin (a 76-residue protein attached to proteins as an intracellular targeting signal).. In terms of biological role, catalytic component of the polycomb repressive deubiquitinase (PR-DUB) complex, a complex that specifically mediates deubiquitination of histone H2A monoubiquitinated at 'Lys-119' (H2AK118ub1). Mediates bisymmetric organization of the PR-DUB complex and is involved in association with nucleosomes to mediate deubiquitination. Does not deubiquitinate monoubiquitinated histone H2B. Required to maintain the transcriptionally repressive state of homeotic genes throughout development. The PR-DUB complex has weak or no activity toward 'Lys-48'- and 'Lys-63'-linked polyubiquitin chains. Polycomb group (PcG) protein. This Drosophila virilis (Fruit fly) protein is Ubiquitin carboxyl-terminal hydrolase calypso.